The chain runs to 115 residues: Nucleoid-associated protein Ava_2322 (115 aa).

This sequence belongs to the YbaB/EbfC family. Homodimer.

Its subcellular location is the cytoplasm. It localises to the nucleoid. Its function is as follows. Binds to DNA and alters its conformation. May be involved in regulation of gene expression, nucleoid organization and DNA protection. This Trichormus variabilis (strain ATCC 29413 / PCC 7937) (Anabaena variabilis) protein is Nucleoid-associated protein Ava_2322.